Consider the following 413-residue polypeptide: MLEAPSFDKMLGMFYYATDTCPSGGVIKRSPEDFVVEEVLLDGTVIATSGVELRPRVGNWTWIHVVKRNVDTIKLVLRLARALGLSHRDVSVGGLKDTKAVTSQIISVRGPVANLPQLPGVQFLGMWSMDKPITPSQIYGNRFTIILRDVERISCAEGALEALKKTAAPNYYGYQRFGTIRPVTHLLGKALLKKDPHLFFEVMFCKIFSRESEVAKRAREAACKGDYAKALELFPKKFVEERVFLKRLAGGYDMWNAIMAIPPQILRVYIEAAQSYIFNRFLSIRMEIGPIDRPVEGDLVEINRQIAYYAEGLGGEVVLPVVGAGVRMPRGKVGEALLRVLREEGLDPSAFLKMPRGLRVYGTYRRVRLEPAGFEYKIMGNDVFMQFTLPRGSYATVLLREVVKPAEPHKHGF.

Asp97 functions as the Nucleophile in the catalytic mechanism. The TRUD domain occupies 167–370 (AAPNYYGYQR…YGTYRRVRLE (204 aa)).

Belongs to the pseudouridine synthase TruD family.

It catalyses the reaction uridine(13) in tRNA = pseudouridine(13) in tRNA. Its function is as follows. Could be responsible for synthesis of pseudouridine from uracil-13 in transfer RNAs. In Pyrobaculum aerophilum (strain ATCC 51768 / DSM 7523 / JCM 9630 / CIP 104966 / NBRC 100827 / IM2), this protein is Probable tRNA pseudouridine synthase D.